The primary structure comprises 156 residues: ATP synthase subunit b (156 aa).

Residues 7–27 (FFAQMVVFFILWWVVAKFIWP) form a helical membrane-spanning segment.

Belongs to the ATPase B chain family. As to quaternary structure, F-type ATPases have 2 components, F(1) - the catalytic core - and F(0) - the membrane proton channel. F(1) has five subunits: alpha(3), beta(3), gamma(1), delta(1), epsilon(1). F(0) has three main subunits: a(1), b(2) and c(10-14). The alpha and beta chains form an alternating ring which encloses part of the gamma chain. F(1) is attached to F(0) by a central stalk formed by the gamma and epsilon chains, while a peripheral stalk is formed by the delta and b chains.

The protein localises to the cell inner membrane. Functionally, f(1)F(0) ATP synthase produces ATP from ADP in the presence of a proton or sodium gradient. F-type ATPases consist of two structural domains, F(1) containing the extramembraneous catalytic core and F(0) containing the membrane proton channel, linked together by a central stalk and a peripheral stalk. During catalysis, ATP synthesis in the catalytic domain of F(1) is coupled via a rotary mechanism of the central stalk subunits to proton translocation. Its function is as follows. Component of the F(0) channel, it forms part of the peripheral stalk, linking F(1) to F(0). This chain is ATP synthase subunit b, found in Cupriavidus necator (strain ATCC 17699 / DSM 428 / KCTC 22496 / NCIMB 10442 / H16 / Stanier 337) (Ralstonia eutropha).